We begin with the raw amino-acid sequence, 376 residues long: Histidinol-phosphate aminotransferase 1 (376 aa).

K235 is subject to N6-(pyridoxal phosphate)lysine.

It belongs to the class-II pyridoxal-phosphate-dependent aminotransferase family. Histidinol-phosphate aminotransferase subfamily. In terms of assembly, homodimer. Requires pyridoxal 5'-phosphate as cofactor.

It carries out the reaction L-histidinol phosphate + 2-oxoglutarate = 3-(imidazol-4-yl)-2-oxopropyl phosphate + L-glutamate. It participates in amino-acid biosynthesis; L-histidine biosynthesis; L-histidine from 5-phospho-alpha-D-ribose 1-diphosphate: step 7/9. This Cupriavidus pinatubonensis (strain JMP 134 / LMG 1197) (Cupriavidus necator (strain JMP 134)) protein is Histidinol-phosphate aminotransferase 1.